The following is a 218-amino-acid chain: Glutathione S-transferase class-mu 26 kDa isozyme (218 aa).

The GST N-terminal domain maps to 2–83 (SPILGYWKIK…YIADKHNMLG (82 aa)). Residues 7-8 (YW), 41-45 (WRNKK), 54-55 (NL), and 67-68 (QS) each bind glutathione. Residues 85 to 203 (CPKERAEISM…KSSKYIAWPL (119 aa)) form the GST C-terminal domain. Residue Tyr-111 coordinates substrate.

Belongs to the GST superfamily. Mu family. As to quaternary structure, homodimer.

It carries out the reaction RX + glutathione = an S-substituted glutathione + a halide anion + H(+). Conjugation of reduced glutathione to a wide number of exogenous and endogenous hydrophobic electrophiles. In terms of biological role, GST isoenzymes appear to play a central role in the parasite detoxification system. Other functions are also suspected including a role in increasing the solubility of haematin in the parasite gut. The protein is Glutathione S-transferase class-mu 26 kDa isozyme of Schistosoma japonicum (Blood fluke).